The primary structure comprises 76 residues: Small ribosomal subunit protein bS18 (76 aa).

This sequence belongs to the bacterial ribosomal protein bS18 family. As to quaternary structure, part of the 30S ribosomal subunit. Forms a tight heterodimer with protein bS6.

Its function is as follows. Binds as a heterodimer with protein bS6 to the central domain of the 16S rRNA, where it helps stabilize the platform of the 30S subunit. This chain is Small ribosomal subunit protein bS18, found in Xanthomonas campestris pv. campestris (strain 8004).